The chain runs to 359 residues: Phosphoserine aminotransferase (359 aa).

Residue R41 coordinates L-glutamate. Pyridoxal 5'-phosphate is bound by residues 75 to 76 (AS), W101, T152, D171, and Q194. Residue K195 is modified to N6-(pyridoxal phosphate)lysine. Position 236–237 (236–237 (NT)) interacts with pyridoxal 5'-phosphate.

The protein belongs to the class-V pyridoxal-phosphate-dependent aminotransferase family. SerC subfamily. In terms of assembly, homodimer. Pyridoxal 5'-phosphate is required as a cofactor.

The protein resides in the cytoplasm. The catalysed reaction is O-phospho-L-serine + 2-oxoglutarate = 3-phosphooxypyruvate + L-glutamate. It catalyses the reaction 4-(phosphooxy)-L-threonine + 2-oxoglutarate = (R)-3-hydroxy-2-oxo-4-phosphooxybutanoate + L-glutamate. It functions in the pathway amino-acid biosynthesis; L-serine biosynthesis; L-serine from 3-phospho-D-glycerate: step 2/3. The protein operates within cofactor biosynthesis; pyridoxine 5'-phosphate biosynthesis; pyridoxine 5'-phosphate from D-erythrose 4-phosphate: step 3/5. Catalyzes the reversible conversion of 3-phosphohydroxypyruvate to phosphoserine and of 3-hydroxy-2-oxo-4-phosphonooxybutanoate to phosphohydroxythreonine. In Acinetobacter baumannii (strain AB307-0294), this protein is Phosphoserine aminotransferase.